The following is a 1107-amino-acid chain: Probable chromatin-remodeling complex ATPase chain (1107 aa).

2 disordered regions span residues 1-124 (MAKP…KREK) and 177-217 (GNQS…GSGG). Composition is skewed to acidic residues over residues 8 to 25 (DEEE…EEQS), 33 to 43 (GEEEDEEEEEA), 53 to 65 (GGEE…EEIE), and 89 to 114 (EGDE…DEAE). Residues 121 to 147 (KREKARLKEMQKLKKQKIQEILDTQNA) adopt a coiled-coil conformation. The span at 183 to 193 (KKPRGRGRHAS) shows a compositional bias: basic residues. A compositionally biased stretch (acidic residues) spans 197-211 (EEEEDEEYLKEEEDA). In terms of domain architecture, Helicase ATP-binding spans 243 to 408 (IRLYENGING…WSLLNFLLPE (166 aa)). 256–263 (DEMGLGKT) contributes to the ATP binding site. The DEAH box signature appears at 359–362 (DEAH). One can recognise a Helicase C-terminal domain in the interval 536 to 687 (LLDKLLPKLK…ALVIQQGRLA (152 aa)). 2 consecutive SANT domains span residues 877–929 (EGFA…ERYK) and 978–1039 (QNKG…DTLI). A coiled-coil region spans residues 1029 to 1067 (QELARRCDTLIRLVEKENQEYDEQERQARKDKRMAKNMT). Residues 1049–1107 (YDEQERQARKDKRMAKNMTPTKRSALRVSEGETTPSNSFKRRRQSLMDDYVGSGRRKRG) are disordered.

It belongs to the SNF2/RAD54 helicase family. ISWI subfamily.

It localises to the nucleus. Functionally, possesses intrinsic ATP-dependent nucleosome-remodeling activity. Constitutes the catalytic subunit of several complexes capable of forming ordered nucleosome arrays on chromatin in vitro. The sequence is that of Probable chromatin-remodeling complex ATPase chain from Oryza sativa subsp. japonica (Rice).